The following is a 527-amino-acid chain: Catalase (527 aa).

Residues 1–22 are compositionally biased toward basic and acidic residues; sequence MADSRDPASDQMKQWKEQRAPQ. Residues 1–34 form a disordered region; it reads MADSRDPASDQMKQWKEQRAPQKPDVLTTGGGNP. Ala2 is modified (N-acetylalanine). A Phosphoserine modification is found at Ser9. Lys13 is modified (N6-succinyllysine). Active-site residues include His75 and Asn148. 4 residues coordinate NADP(+): His194, Ser201, Arg203, and Asn213. Lys221 bears the N6-succinyllysine mark. Residue Lys233 is modified to N6-acetyllysine. NADP(+) contacts are provided by Lys237, Trp303, His305, and Lys306. The residue at position 306 (Lys306) is an N6-acetyllysine; alternate. Position 306 is an N6-succinyllysine; alternate (Lys306). Tyr358 contacts heme. A phosphoserine mark is found at Ser417 and Ser434. An N6-acetyllysine; alternate mark is found at Lys449 and Lys480. N6-succinyllysine; alternate is present on residues Lys449 and Lys480. Thr511 is modified (phosphothreonine). A Phosphoserine modification is found at Ser517. Lys522 is subject to N6-succinyllysine. Positions 524 to 527 match the Microbody targeting signal; atypical motif; sequence KANL.

It belongs to the catalase family. Homotetramer. Interacts (via microbody targeting signal) with PEX5, monomeric form interacts with PEX5, leading to its translocation into peroxisomes. The cofactor is heme. Requires NADP(+) as cofactor. As to expression, expressed in renal proximal tubules (at protein level).

It is found in the peroxisome matrix. The catalysed reaction is 2 H2O2 = O2 + 2 H2O. In terms of biological role, catalyzes the degradation of hydrogen peroxide (H(2)O(2)) generated by peroxisomal oxidases to water and oxygen, thereby protecting cells from the toxic effects of hydrogen peroxide. Promotes growth of cells including T-cells, B-cells, myeloid leukemia cells, melanoma cells, mastocytoma cells and normal and transformed fibroblast cells. In Rattus norvegicus (Rat), this protein is Catalase (Cat).